The primary structure comprises 149 residues: Myoglobin (149 aa).

The residue at position 2 (threonine 2) is an N-acetylthreonine. The Globin domain maps to 2-143; it reads TEWEHVNKVW…ICSDLETLYK (142 aa). Histidine 60 lines the nitrite pocket. Histidine 60 contributes to the O2 binding site. Histidine 89 contributes to the heme b binding site.

It belongs to the globin family. Monomeric.

The protein resides in the cytoplasm. The protein localises to the sarcoplasm. It catalyses the reaction Fe(III)-heme b-[protein] + nitric oxide + H2O = Fe(II)-heme b-[protein] + nitrite + 2 H(+). It carries out the reaction H2O2 + AH2 = A + 2 H2O. Its function is as follows. Monomeric heme protein which primary function is to store oxygen and facilitate its diffusion within muscle tissues. Reversibly binds oxygen through a pentacoordinated heme iron and enables its timely and efficient release as needed during periods of heightened demand. Depending on the oxidative conditions of tissues and cells, and in addition to its ability to bind oxygen, it also has a nitrite reductase activity whereby it regulates the production of bioactive nitric oxide. Under stress conditions, like hypoxia and anoxia, it also protects cells against reactive oxygen species thanks to its pseudoperoxidase activity. The sequence is that of Myoglobin (mb) from Heterodontus portusjacksoni (Port Jackson shark).